Consider the following 471-residue polypeptide: Vitellogenic carboxypeptidase (471 aa).

The first 19 residues, 1–19 (MVKFHLLVLIAFTCYTCSD), serve as a signal peptide directing secretion. Asn135 carries an N-linked (GlcNAc...) asparagine glycan. Residues Ser207, Asp391, and His448 contribute to the active site.

Belongs to the peptidase S10 family. Synthesized in the fat body of vitellogenic females, secreted into the hemolymph and accumulates in yolk bodies of developing oocytes.

The protein resides in the secreted. In terms of biological role, may play a role in activating hydrolytic enzymes that are involved in the degradation of yolk proteins in developing embryos or may function as an exopeptidase in the degradation of vitellogenin. In Aedes aegypti (Yellowfever mosquito), this protein is Vitellogenic carboxypeptidase (VCP).